A 173-amino-acid chain; its full sequence is Mesencephalic astrocyte-derived neurotrophic factor homolog (173 aa).

Positions 1 to 22 (MKTWYMVVVIGFLATLAQTSLA) are cleaved as a signal peptide. 4 disulfide bridges follow: C28/C114, C31/C103, C61/C72, and C148/C151.

It belongs to the ARMET family.

The protein localises to the secreted. Its function is as follows. Required during the maturation of the embryonic nervous system for maintenance of neuronal and cuticular connectivity. Essential for maintenance of dopaminergic neurons and dopamine levels. The chain is Mesencephalic astrocyte-derived neurotrophic factor homolog from Drosophila erecta (Fruit fly).